We begin with the raw amino-acid sequence, 354 residues long: Carbamoyl phosphate synthase arginine-specific small chain (354 aa).

The interval 1 to 163 is CPSase; it reads MKAYLHVASG…RTIETYGEGG (163 aa). L-glutamine is bound by residues Ser-46, Gly-213, and Gly-215. One can recognise a Glutamine amidotransferase type-1 domain in the interval 165 to 352; that stretch reads HLVLVDFGYK…LQTVFKGENV (188 aa). Cys-240 (nucleophile) is an active-site residue. The L-glutamine site is built by Leu-241, Gln-244, Asn-282, and Tyr-285. Catalysis depends on residues His-325 and Glu-327.

It belongs to the CarA family. Composed of two chains; the small (or glutamine) chain promotes the hydrolysis of glutamine to ammonia, which is used by the large (or ammonia) chain to synthesize carbamoyl phosphate. Tetramer of heterodimers (alpha,beta)4.

The catalysed reaction is hydrogencarbonate + L-glutamine + 2 ATP + H2O = carbamoyl phosphate + L-glutamate + 2 ADP + phosphate + 2 H(+). It catalyses the reaction L-glutamine + H2O = L-glutamate + NH4(+). The protein operates within amino-acid biosynthesis; L-arginine biosynthesis; carbamoyl phosphate from bicarbonate: step 1/1. Functionally, small subunit of the glutamine-dependent carbamoyl phosphate synthetase (CPSase). CPSase catalyzes the formation of carbamoyl phosphate from the ammonia moiety of glutamine, carbonate, and phosphate donated by ATP, constituting the first step of the biosynthetic pathway leading to arginine and/or urea. The small subunit (glutamine amidotransferase) binds and cleaves glutamine to supply the large subunit with the substrate ammonia. This chain is Carbamoyl phosphate synthase arginine-specific small chain, found in Geobacillus stearothermophilus (Bacillus stearothermophilus).